The sequence spans 202 residues: Translation initiation factor 2 subunit beta (202 aa).

A TRAM domain is found at Ala145 to Ala202.

The protein belongs to the eIF-2-beta/eIF-5 family. In terms of assembly, heterotrimer composed of an alpha, a beta and a gamma chain.

In terms of biological role, eIF-2 functions in the early steps of protein synthesis by forming a ternary complex with GTP and initiator tRNA. The sequence is that of Translation initiation factor 2 subunit beta (eif2b) from Methanosarcina mazei (strain ATCC BAA-159 / DSM 3647 / Goe1 / Go1 / JCM 11833 / OCM 88) (Methanosarcina frisia).